Here is a 227-residue protein sequence, read N- to C-terminus: Extracellular small neutral protease (227 aa).

The first 29 residues, 1–29, serve as a signal peptide directing secretion; it reads MRITLPLLSTAVGLGLTAAVLGTGPAATA. Positions 30 to 42 are excised as a propeptide; it reads AAPQEPVRAAQLG. Positions 156 and 158 each coordinate Ca(2+). H163 contacts Zn(2+). Residue E164 is part of the active site. Zn(2+)-binding residues include H167 and D173. A disulfide bond links C179 and C192.

This sequence belongs to the peptidase M7 family. Ca(2+) is required as a cofactor. It depends on Zn(2+) as a cofactor. Post-translationally, the N-terminus is blocked.

The protein localises to the secreted. The enzyme catalyses Hydrolyzes proteins with a preference for Tyr or Phe in the P1' position. Has no action on amino-acid p-nitroanilides.. The sequence is that of Extracellular small neutral protease (snpA) from Streptomyces lividans.